The primary structure comprises 378 residues: Succinyl-diaminopimelate desuccinylase (378 aa).

Position 68 (H68) interacts with Zn(2+). D70 is an active-site residue. Position 101 (D101) interacts with Zn(2+). Residue E135 is the Proton acceptor of the active site. 3 residues coordinate Zn(2+): E136, E164, and H350.

The protein belongs to the peptidase M20A family. DapE subfamily. In terms of assembly, homodimer. Requires Zn(2+) as cofactor. It depends on Co(2+) as a cofactor.

It catalyses the reaction N-succinyl-(2S,6S)-2,6-diaminopimelate + H2O = (2S,6S)-2,6-diaminopimelate + succinate. The protein operates within amino-acid biosynthesis; L-lysine biosynthesis via DAP pathway; LL-2,6-diaminopimelate from (S)-tetrahydrodipicolinate (succinylase route): step 3/3. Its function is as follows. Catalyzes the hydrolysis of N-succinyl-L,L-diaminopimelic acid (SDAP), forming succinate and LL-2,6-diaminopimelate (DAP), an intermediate involved in the bacterial biosynthesis of lysine and meso-diaminopimelic acid, an essential component of bacterial cell walls. The protein is Succinyl-diaminopimelate desuccinylase of Acinetobacter baumannii (strain ATCC 17978 / DSM 105126 / CIP 53.77 / LMG 1025 / NCDC KC755 / 5377).